Reading from the N-terminus, the 122-residue chain is Large ribosomal subunit protein uL18 (122 aa).

The tract at residues 1 to 24 (MLKKADKNANRLQRHKRVRRKISG) is disordered. Positions 12–22 (LQRHKRVRRKI) are enriched in basic residues.

It belongs to the universal ribosomal protein uL18 family. As to quaternary structure, part of the 50S ribosomal subunit; part of the 5S rRNA/L5/L18/L25 subcomplex. Contacts the 5S and 23S rRNAs.

Functionally, this is one of the proteins that bind and probably mediate the attachment of the 5S RNA into the large ribosomal subunit, where it forms part of the central protuberance. This is Large ribosomal subunit protein uL18 from Clostridioides difficile (strain 630) (Peptoclostridium difficile).